The chain runs to 432 residues: Glutamate-1-semialdehyde 2,1-aminomutase (432 aa).

Position 272 is an N6-(pyridoxal phosphate)lysine (K272).

It belongs to the class-III pyridoxal-phosphate-dependent aminotransferase family. HemL subfamily. As to quaternary structure, homodimer. Requires pyridoxal 5'-phosphate as cofactor.

The protein localises to the cytoplasm. It carries out the reaction (S)-4-amino-5-oxopentanoate = 5-aminolevulinate. Its pathway is porphyrin-containing compound metabolism; protoporphyrin-IX biosynthesis; 5-aminolevulinate from L-glutamyl-tRNA(Glu): step 2/2. The protein operates within porphyrin-containing compound metabolism; chlorophyll biosynthesis. In Nostoc punctiforme (strain ATCC 29133 / PCC 73102), this protein is Glutamate-1-semialdehyde 2,1-aminomutase.